Here is a 71-residue protein sequence, read N- to C-terminus: MPNRKIEIVTTNCRRCGKSISTLSRSLIGADALREELGGICGDCITPEERQRIEQGTLLAALRQCAAAGTS.

The segment at residues 9–28 is a DNA-binding region (H-T-H motif); the sequence is VTTNCRRCGKSISTLSRSLI.

The protein is Protein KleB (kleB) of Escherichia coli.